Consider the following 251-residue polypeptide: Short chain dehydrogenase gsfK (251 aa).

Residues L14, T33, E60, N88, and K122 each coordinate NADP(+). Residues S143 and Y161 each act as proton donor in the active site. NADP(+) is bound by residues Y161, K165, V192, and T194. K165 serves as the catalytic Lowers pKa of active site Tyr.

Belongs to the short-chain dehydrogenases/reductases (SDR) family.

Its pathway is secondary metabolite biosynthesis; terpenoid biosynthesis. In terms of biological role, short chain dehydrogenase; part of the gene cluster that mediates the biosynthesis of griseofulvin, an important antifungal drug that has been in use for a long time for treating dermatophyte infections. The first step of the pathway is the formation of the heptaketide backbone by gsfA which is initiated by priming with acetyl-CoA, followed by sequential condensations of 6 malonyl-CoA units. The resulting benzophenone can undergo a spontaneous dehydration to form norlichexanthone. However, the true precursor for the griseofulvin biosynthesis is not norlichexanthone, but the heptaketide benzophenone that is O-methylated at 3-OH by gsfB to produce griseophenone D which is further methylated at 9-OH by gsfC to yield griseophenone C. Griseophenone C is then substrate of halogenase gsfI which is responsible for the regio-specific chlorination at the C13 position to form griseophenone B. The cytochrome P450 gsfF catalyzes the coupling of orcinol and phloroglucinol rings in griseophenone B to form desmethyl-dehydrogriseofulvin A which is further methylated at 5-OH by gsfD to yield dehydrogriseofulvin. Finally, gsfE performs stereospecific reduction of enone 18 of dehydrogriseofulvin to afford the final product griseofulvin. The exact role of gsfK within the pathway has not been identified yet. This chain is Short chain dehydrogenase gsfK, found in Penicillium aethiopicum.